Here is a 273-residue protein sequence, read N- to C-terminus: Large ribosomal subunit protein uL2cz/uL2cy (273 aa).

Disordered regions lie at residues 1-20 (MAIHLYKTSTPSTRKGAVDS) and 224-254 (NPVDHPHGGGEGRAPIGRKKPTTPWGYPALG).

The protein belongs to the universal ribosomal protein uL2 family. As to quaternary structure, part of the 50S ribosomal subunit.

The protein localises to the plastid. It is found in the chloroplast. The sequence is that of Large ribosomal subunit protein uL2cz/uL2cy (rpl2-A) from Nuphar advena (Common spatterdock).